Consider the following 801-residue polypeptide: Transducin beta-like protein 3 (801 aa).

Ala2 is modified (N-acetylalanine). 13 WD repeats span residues 64 to 105, 107 to 146, 149 to 190, 193 to 232, 245 to 284, 290 to 329, 332 to 372, 374 to 413, 419 to 459, 477 to 516, 519 to 560, 562 to 602, and 604 to 642; these read EDQE…RLWK, IHTA…GTHH, GSPG…CLAV, AHYS…TTRT, LPEQ…CVYT, GLRQ…LQKQ, GYSE…CQIL, GHTD…QVAC, GHTH…LAKS, CHDK…LLGV, GHRR…KTFE, HDAS…RTLD, and HEDK…EQAE. Phosphoserine is present on Ser257. Lys407 is covalently cross-linked (Glycyl lysine isopeptide (Lys-Gly) (interchain with G-Cter in SUMO2)).

As to quaternary structure, part of the small subunit (SSU) processome, composed of more than 70 proteins and the RNA chaperone small nucleolar RNA (snoRNA) U3.

Its subcellular location is the nucleus. The protein resides in the nucleolus. Its function is as follows. Part of the small subunit (SSU) processome, first precursor of the small eukaryotic ribosomal subunit. During the assembly of the SSU processome in the nucleolus, many ribosome biogenesis factors, an RNA chaperone and ribosomal proteins associate with the nascent pre-rRNA and work in concert to generate RNA folding, modifications, rearrangements and cleavage as well as targeted degradation of pre-ribosomal RNA by the RNA exosome. The sequence is that of Transducin beta-like protein 3 (Tbl3) from Mus musculus (Mouse).